Here is a 551-residue protein sequence, read N- to C-terminus: Cation/acetate symporter ActP (551 aa).

14 consecutive transmembrane segments (helical) span residues 5–25 (HWSALSLFVLPALAQAEALTG), 34–54 (IQAIVMFLLFVGGTLYITYWA), 77–97 (GLAIAGDYMSAASFLGISALV), 104–124 (GLIYSIGFLIGWPIILFLIAE), 150–170 (LSACGSLVVVALYLIAQMVGA), 184–204 (VAVVLVGILMVLYVLFGGMLA), 207–227 (WVQIIKAVMLLSGATFMAIMV), 263–283 (ISALSLGLALMFGTAGLPHIL), 304–324 (GFIGYFYILTFIIGFGAILLV), 356–376 (FFLGFISAVAFATILAVVAGL), 406–426 (VSKITVIILGIVAIGLGILFE), 430–450 (IAFMVGLAFSIAASCNFPIII), 469–489 (LGLSTAVILMILGPTIWVTIL), and 498–518 (YEYPALFSMIAAFVGTWFFSI).

Belongs to the sodium:solute symporter (SSF) (TC 2.A.21) family.

Its subcellular location is the cell inner membrane. Its function is as follows. Transports acetate. This is Cation/acetate symporter ActP from Yersinia pestis bv. Antiqua (strain Antiqua).